Here is a 369-residue protein sequence, read N- to C-terminus: Tyrosinase-like protein orsC (369 aa).

A signal peptide spans M1–A23. Cu cation-binding residues include H112 and H121. 4 N-linked (GlcNAc...) asparagine glycosylation sites follow: N165, N179, N253, and N272. H315 contributes to the Cu cation binding site.

Its pathway is secondary metabolite biosynthesis. In terms of biological role, tyrosinase-like protein; part of the gene cluster that mediates the biosynthesis of orsellinic acid, as well as of the cathepsin K inhibitors F9775 A and F9775 B. The non-reducing polyketide synthase orsA produces orsellinic acid by condensing acetyl-CoA with 3 malonyl-CoA units. Further modifications by the decarboxylase orsB and the tyrosinase-like protein orsC lead to the production of F9775 A and F9775 B. The functions of orsD and orsE remain unclear since only orsB and orsC are required to convert orsellinic acid into F9775 A and F9775 B. This Emericella nidulans (strain FGSC A4 / ATCC 38163 / CBS 112.46 / NRRL 194 / M139) (Aspergillus nidulans) protein is Tyrosinase-like protein orsC.